The sequence spans 186 residues: Dynactin subunit 3 (186 aa).

A2 carries the post-translational modification N-acetylalanine. Residues 135–157 (QQQDQCVEITEESKALLEEYNKT) are a coiled coil.

Belongs to the dynactin subunit 3 family. Subunit of dynactin, a multiprotein complex part of a tripartite complex with dynein and a adapter, such as BICDL1, BICD2 or HOOK3. The dynactin complex is built around ACTR1A/ACTB filament and consists of an actin-related filament composed of a shoulder domain, a pointed end and a barbed end. Its length is defined by its flexible shoulder domain. The soulder is composed of 2 DCTN1 subunits, 4 DCTN2 and 2 DCTN3. The 4 DCNT2 (via N-terminus) bind the ACTR1A filament and act as molecular rulers to determine the length. The pointed end is important for binding dynein-dynactin cargo adapters. Consists of 4 subunits: ACTR10, DCNT4, DCTN5 and DCTN6. The barbed end is composed of a CAPZA1:CAPZB heterodimers, which binds ACTR1A/ACTB filament and dynactin and stabilizes dynactin. Ubiquitously expressed. Highly expressed in muscle and pancreas and detected at lower levels in brain.

It is found in the cytoplasm. The protein localises to the cytoskeleton. It localises to the microtubule organizing center. Its subcellular location is the centrosome. The protein resides in the chromosome. It is found in the centromere. The protein localises to the kinetochore. It localises to the spindle. Its subcellular location is the cleavage furrow. The protein resides in the midbody. In terms of biological role, part of the dynactin complex that activates the molecular motor dynein for ultra-processive transport along microtubules. Together with dynein may be involved in spindle assembly and cytokinesis. This chain is Dynactin subunit 3, found in Homo sapiens (Human).